A 510-amino-acid chain; its full sequence is ATP synthase subunit alpha (510 aa).

ATP is bound at residue glycine 171–threonine 178.

This sequence belongs to the ATPase alpha/beta chains family. In terms of assembly, F-type ATPases have 2 components, CF(1) - the catalytic core - and CF(0) - the membrane proton channel. CF(1) has five subunits: alpha(3), beta(3), gamma(1), delta(1), epsilon(1). CF(0) has three main subunits: a(1), b(2) and c(9-12). The alpha and beta chains form an alternating ring which encloses part of the gamma chain. CF(1) is attached to CF(0) by a central stalk formed by the gamma and epsilon chains, while a peripheral stalk is formed by the delta and b chains.

The protein localises to the cell inner membrane. It catalyses the reaction ATP + H2O + 4 H(+)(in) = ADP + phosphate + 5 H(+)(out). Functionally, produces ATP from ADP in the presence of a proton gradient across the membrane. The alpha chain is a regulatory subunit. This chain is ATP synthase subunit alpha, found in Phenylobacterium zucineum (strain HLK1).